The primary structure comprises 86 residues: EMBRYO SURROUNDING FACTOR 1-like protein 2 (86 aa).

A signal peptide spans 1–21 (MKSHIAIICIIMLSFFSMHEY). 4 cysteine pairs are disulfide-bonded: C39–C54, C44–C82, C52–C78, and C55–C65.

The protein belongs to the MEG family.

The protein is EMBRYO SURROUNDING FACTOR 1-like protein 2 (ESFL2) of Arabidopsis thaliana (Mouse-ear cress).